The primary structure comprises 448 residues: Bifunctional protein GlmU (448 aa).

A pyrophosphorylase region spans residues 1–229 (MNNHTLNIII…NDEIQGINNL (229 aa)). Residues 11 to 14 (LAAG), K25, Q76, 81 to 82 (GT), 103 to 105 (YGD), G140, E154, N169, and N227 each bind UDP-N-acetyl-alpha-D-glucosamine. D105 contacts Mg(2+). Mg(2+) is bound at residue N227. The linker stretch occupies residues 230–250 (LQLVRAEKIYQKQQAKLLLLS). The N-acetyltransferase stretch occupies residues 251–448 (GIMIYNPSNF…NEKKQIHKKL (198 aa)). K351 lines the UDP-N-acetyl-alpha-D-glucosamine pocket. The active-site Proton acceptor is the H363. Y366 and N377 together coordinate UDP-N-acetyl-alpha-D-glucosamine. Acetyl-CoA is bound by residues A380, 386–387 (NY), S405, and A423.

This sequence in the N-terminal section; belongs to the N-acetylglucosamine-1-phosphate uridyltransferase family. It in the C-terminal section; belongs to the transferase hexapeptide repeat family. As to quaternary structure, homotrimer. Mg(2+) is required as a cofactor.

The protein localises to the cytoplasm. It carries out the reaction alpha-D-glucosamine 1-phosphate + acetyl-CoA = N-acetyl-alpha-D-glucosamine 1-phosphate + CoA + H(+). The enzyme catalyses N-acetyl-alpha-D-glucosamine 1-phosphate + UTP + H(+) = UDP-N-acetyl-alpha-D-glucosamine + diphosphate. It functions in the pathway nucleotide-sugar biosynthesis; UDP-N-acetyl-alpha-D-glucosamine biosynthesis; N-acetyl-alpha-D-glucosamine 1-phosphate from alpha-D-glucosamine 6-phosphate (route II): step 2/2. Its pathway is nucleotide-sugar biosynthesis; UDP-N-acetyl-alpha-D-glucosamine biosynthesis; UDP-N-acetyl-alpha-D-glucosamine from N-acetyl-alpha-D-glucosamine 1-phosphate: step 1/1. The protein operates within bacterial outer membrane biogenesis; LPS lipid A biosynthesis. Its function is as follows. Catalyzes the last two sequential reactions in the de novo biosynthetic pathway for UDP-N-acetylglucosamine (UDP-GlcNAc). The C-terminal domain catalyzes the transfer of acetyl group from acetyl coenzyme A to glucosamine-1-phosphate (GlcN-1-P) to produce N-acetylglucosamine-1-phosphate (GlcNAc-1-P), which is converted into UDP-GlcNAc by the transfer of uridine 5-monophosphate (from uridine 5-triphosphate), a reaction catalyzed by the N-terminal domain. The chain is Bifunctional protein GlmU from Buchnera aphidicola subsp. Baizongia pistaciae (strain Bp).